Here is a 508-residue protein sequence, read N- to C-terminus: Light-independent protochlorophyllide reductase subunit B (508 aa).

Residue aspartate 36 coordinates [4Fe-4S] cluster. Aspartate 294 serves as the catalytic Proton donor. Residue 429–430 (GM) coordinates substrate.

It belongs to the ChlB/BchB/BchZ family. Protochlorophyllide reductase is composed of three subunits; ChlL, ChlN and ChlB. Forms a heterotetramer of two ChlB and two ChlN subunits. [4Fe-4S] cluster serves as cofactor.

The enzyme catalyses chlorophyllide a + oxidized 2[4Fe-4S]-[ferredoxin] + 2 ADP + 2 phosphate = protochlorophyllide a + reduced 2[4Fe-4S]-[ferredoxin] + 2 ATP + 2 H2O. It functions in the pathway porphyrin-containing compound metabolism; chlorophyll biosynthesis (light-independent). Its function is as follows. Component of the dark-operative protochlorophyllide reductase (DPOR) that uses Mg-ATP and reduced ferredoxin to reduce ring D of protochlorophyllide (Pchlide) to form chlorophyllide a (Chlide). This reaction is light-independent. The NB-protein (ChlN-ChlB) is the catalytic component of the complex. This is Light-independent protochlorophyllide reductase subunit B from Acaryochloris marina (strain MBIC 11017).